The following is a 179-amino-acid chain: Large ribosomal subunit protein uL5 (179 aa).

It belongs to the universal ribosomal protein uL5 family. As to quaternary structure, part of the 50S ribosomal subunit; part of the 5S rRNA/L5/L18/L25 subcomplex. Contacts the 5S rRNA and the P site tRNA. Forms a bridge to the 30S subunit in the 70S ribosome.

This is one of the proteins that bind and probably mediate the attachment of the 5S RNA into the large ribosomal subunit, where it forms part of the central protuberance. In the 70S ribosome it contacts protein S13 of the 30S subunit (bridge B1b), connecting the 2 subunits; this bridge is implicated in subunit movement. Contacts the P site tRNA; the 5S rRNA and some of its associated proteins might help stabilize positioning of ribosome-bound tRNAs. The chain is Large ribosomal subunit protein uL5 from Oceanobacillus iheyensis (strain DSM 14371 / CIP 107618 / JCM 11309 / KCTC 3954 / HTE831).